Here is a 391-residue protein sequence, read N- to C-terminus: F-box only protein 5 (391 aa).

An F-box domain is found at 198-245; sequence AELFHRDFKHLLTKILRHLSAMDLINVISVSTTWRKILQKDNSAYNSY. The segment at 318–366 adopts a ZBR-type zinc-finger fold; sequence CLKVCVDCSSPAKYDPYLHRATCTRESCKFDFCTLCSCKYHGSKCCQTS. Positions 322, 325, 340, 345, 350, 353, 358, and 363 each coordinate Zn(2+). The interval 365–391 is disordered; the sequence is TSKPRSYRVPSEPLPGSKKSKQNLRRL. Residues 382–391 show a composition bias toward basic residues; the sequence is KKSKQNLRRL.

As to quaternary structure, part of a SCF (SKP1-cullin-F-box) protein ligase complex. Interacts with btrc. Interacts with skp1. Interacts with cdc20. Interacts with pin1; stabilizes fbxo5 by preventing its association with btrc in an isomerization-dependent pathway; this interaction is present during G2 phase and prevents fbxo5 degradation. Interacts with plk1. Post-translationally, proteolysed; proteolysis is induced by both cyclin B-cdk1 and cyclin A-cdk1/2 complex through probable phosphorylation. Proteolysis is inhibited by pin1 during G2.

The protein localises to the nucleus. It localises to the cytoplasm. It is found in the cytoskeleton. The protein resides in the spindle. Its subcellular location is the microtubule organizing center. The protein localises to the centrosome. Its pathway is protein modification; protein ubiquitination. Functionally, regulates progression through early mitosis by inhibiting the anaphase promoting complex/cyclosome (APC). Binds to the APC activators cdc20 to prevent APC activation. Can also bind directly to the APC to inhibit substrate-binding. Required to arrest unfertilized eggs at metaphase of meiosis II, by preventing their release from metaphase of meiosis II, through inhibition of APC-dependent cyclin B destruction leading to stabilization of cyclin B-cdk1 complex activity. The chain is F-box only protein 5 from Xenopus tropicalis (Western clawed frog).